Reading from the N-terminus, the 125-residue chain is Succinate dehydrogenase cytochrome b556 subunit (125 aa).

The Cytoplasmic portion of the chain corresponds to 1-22 (MNAKRPVNLDLTKFHFPPMAIL). A helical transmembrane segment spans residues 23–48 (SIGHRISGFVLFLCMPLMFYLLHRAT). The Periplasmic segment spans residues 49–65 (ASAESFYHLHQLLLHNG). Residues 66-86 (WIKLAVWIMLSATLFHLFAGI) form a helical membrane-spanning segment. A heme-binding site is contributed by H81. The Cytoplasmic segment spans residues 87 to 104 (RHLAMDLGFWESVPEGRI). The helical transmembrane segment at 105-125 (SAYTVFVVSFIAIVLAGVWIW) threads the bilayer.

It belongs to the cytochrome b560 family. Part of an enzyme complex containing four subunits: a flavoprotein, an iron-sulfur protein, plus two membrane-anchoring proteins, SdhC and SdhD. The complex can form homotrimers. Requires heme as cofactor.

Its subcellular location is the cell inner membrane. It participates in carbohydrate metabolism; tricarboxylic acid cycle. In terms of biological role, membrane-anchoring subunit of succinate dehydrogenase (SDH). The sequence is that of Succinate dehydrogenase cytochrome b556 subunit (sdhC) from Coxiella burnetii (strain RSA 493 / Nine Mile phase I).